We begin with the raw amino-acid sequence, 136 residues long: Nucleoside diphosphate kinase (136 aa).

ATP is bound by residues K10, F58, R86, T92, R104, and N114. Residue H117 is the Pros-phosphohistidine intermediate of the active site.

It belongs to the NDK family. In terms of assembly, homotetramer. Mg(2+) serves as cofactor.

The protein localises to the cytoplasm. It catalyses the reaction a 2'-deoxyribonucleoside 5'-diphosphate + ATP = a 2'-deoxyribonucleoside 5'-triphosphate + ADP. The enzyme catalyses a ribonucleoside 5'-diphosphate + ATP = a ribonucleoside 5'-triphosphate + ADP. Major role in the synthesis of nucleoside triphosphates other than ATP. The ATP gamma phosphate is transferred to the NDP beta phosphate via a ping-pong mechanism, using a phosphorylated active-site intermediate. The chain is Nucleoside diphosphate kinase from Corynebacterium jeikeium (strain K411).